A 100-amino-acid polypeptide reads, in one-letter code: MAKKSMIARDVKRKKMVERFSDRRAALMAAFHAAKDPMERLEIHRKIQGLPRNSAPNRVRNRCWATGKPRGVYRDFGLCRNQLRERAHKGELPGVVKSSW.

The protein belongs to the universal ribosomal protein uS14 family. As to quaternary structure, part of the 30S ribosomal subunit. Contacts proteins S3 and S10.

In terms of biological role, binds 16S rRNA, required for the assembly of 30S particles and may also be responsible for determining the conformation of the 16S rRNA at the A site. In Synechococcus sp. (strain CC9311), this protein is Small ribosomal subunit protein uS14.